The chain runs to 891 residues: uncharacterized protein (891 aa).

This is an uncharacterized protein from Ictalurid herpesvirus 1 (strain Auburn) (IcHV-1).